A 109-amino-acid polypeptide reads, in one-letter code: Phosphocarrier protein HPr (109 aa).

The region spanning 22–109 (ELSAVFTIRN…EVFNSGFGEL (88 aa)) is the HPr domain. The Pros-phosphohistidine intermediate role is filled by histidine 36.

Belongs to the HPr family.

The protein resides in the cytoplasm. General (non sugar-specific) component of the phosphoenolpyruvate-dependent sugar phosphotransferase system (sugar PTS). This major carbohydrate active-transport system catalyzes the phosphorylation of incoming sugar substrates concomitantly with their translocation across the cell membrane. The phosphoryl group from phosphoenolpyruvate (PEP) is transferred to the phosphoryl carrier protein HPr by enzyme I. Phospho-HPr then transfers it to the PTS EIIA domain. The polypeptide is Phosphocarrier protein HPr (ptsH) (Chlamydia trachomatis serovar D (strain ATCC VR-885 / DSM 19411 / UW-3/Cx)).